A 469-amino-acid polypeptide reads, in one-letter code: Glutamate--tRNA ligase (469 aa).

The short motif at 9 to 19 is the 'HIGH' region element; sequence PSPTGYLHVGG. Zn(2+) is bound by residues C98, C100, C125, and D127. The 'KMSKS' region motif lies at 237–241; it reads KLSKR. K240 is a binding site for ATP.

It belongs to the class-I aminoacyl-tRNA synthetase family. Glutamate--tRNA ligase type 1 subfamily. As to quaternary structure, monomer. Zn(2+) is required as a cofactor.

Its subcellular location is the cytoplasm. It catalyses the reaction tRNA(Glu) + L-glutamate + ATP = L-glutamyl-tRNA(Glu) + AMP + diphosphate. Functionally, catalyzes the attachment of glutamate to tRNA(Glu) in a two-step reaction: glutamate is first activated by ATP to form Glu-AMP and then transferred to the acceptor end of tRNA(Glu). The sequence is that of Glutamate--tRNA ligase from Erwinia tasmaniensis (strain DSM 17950 / CFBP 7177 / CIP 109463 / NCPPB 4357 / Et1/99).